We begin with the raw amino-acid sequence, 741 residues long: MIPVTILCVLLCLNLAWAQDGKTTFEKEGGGGRGPRILENMHESSCKYEKNWPICVDDDWGTKCPSCCRMQGIIDDTDQNYSQRIDNIRQQLADSQNKYKTSNRVIVETINILKPGLEGAQQLDENYGHVSTELRRRIVTLKQRVATQVNRIKALQNSIQEQVVEMKRLEVDIDIKIRACKGSCARSFDYQVDKEGYDNIQKHLTQASSIDMHPDFQTTTLSTLKMRPLKDSNVPEHFKLKPSPEMQAMSAFNNIKQMQVVLERPETDHVAEARGDSSPSHTGKLITSSHRRESPSLVDKTSSASSVHRCTRTVTKKVISGPDGPREEIVEKMVSSDGSDCSHLQGGREGSTYHFSGTGDFHKLDRLLPDLESFFTHDSVSTSSRHSIGSSTSSHVTGAGSSHLGTGGKDKFTDLGEEEEDDFGGLQPSGFAAGSASHSKTVLTSSSSSFNKGGSTFETKSLKTRETSEQLGGVQHDQSAEDTPDFKARSFRPAAMSTRRSYNGKDCDDIRQKHTSGAKSGIFKIKPEGSNKVLSVYCDQETTLGGWLLIQQRMDGSVNFNRTWQDYRRGFGSVDGKGQGELWLGNENIHLLTQNDTLLRVELEDWDGNAAYAEYIVQVGTEAEGYALTVSSYEGTAGDALVAGWLEEGSEYTSHAQMQFSTFDRDQDHWEESCAEVYGGGWWYNSCQAANLNGIYYPGGHYDPRYNVPYEIENGVVWIPFRASDYSLKVVRMKIRPLETL.

A signal peptide spans 1–18 (MIPVTILCVLLCLNLAWA). Q19 bears the Pyrrolidone carboxylic acid mark. Residues 67 to 506 (CCRMQGIIDD…STRRSYNGKD (440 aa)) adopt a coiled-coil conformation. The segment at 270–307 (VAEARGDSSPSHTGKLITSSHRRESPSLVDKTSSASSV) is disordered. Residues 277 to 288 (SSPSHTGKLITS) are compositionally biased toward polar residues. C310 and C341 are disulfide-bonded. Low complexity-rich tracts occupy residues 381-398 (STSSRHSIGSSTSSHVTG) and 435-449 (SASHSKTVLTSSSSS). The tract at residues 381–510 (STSSRHSIGS…SYNGKDCDDI (130 aa)) is disordered. Over residues 450 to 459 (FNKGGSTFET) the composition is skewed to polar residues. The Fibrinogen C-terminal domain maps to 498–739 (TRRSYNGKDC…VVRMKIRPLE (242 aa)). Ca(2+) is bound by residues D666, D668, W670, and E672. C674 and C687 are disulfide-bonded.

Heterohexamer; disulfide linked. Contains 2 sets of 3 non-identical chains (alpha, beta and gamma). The 2 heterotrimers are in head to head conformation with the N-termini in a small central domain. Post-translationally, conversion of fibrinogen to fibrin is triggered by thrombin, which cleaves fibrinopeptides A and B from alpha and beta chains, and thus exposes the N-terminal polymerization sites responsible for the formation of the soft clot. The soft clot is converted into the hard clot by factor XIIIA which catalyzes the epsilon-(gamma-glutamyl)lysine cross-linking between gamma chains (stronger) and between alpha chains (weaker) of different monomers. Forms F13A-mediated cross-links between a glutamine and the epsilon-amino group of a lysine residue, forming fibronectin-fibrinogen heteropolymers.

Its subcellular location is the secreted. Cleaved by the protease thrombin to yield monomers which, together with fibrinogen beta (FGB) and fibrinogen gamma (FGG), polymerize to form an insoluble fibrin matrix. Fibrin has a major function in hemostasis as one of the primary components of blood clots. The protein is Fibrinogen alpha chain (FGA) of Gallus gallus (Chicken).